Here is a 1902-residue protein sequence, read N- to C-terminus: Plexin-B3 (1902 aa).

The N-terminal stretch at 1-36 (MLTDFLQAPVMAPWSPFSLHLLLLFLPLLPLTRVHR) is a signal peptide. A Sema domain is found at 37–461 (FSVPNTSFNH…TAQQVDRILV (425 aa)). At 37–1245 (FSVPNTSFNH…MMSTFPVEAQ (1209 aa)) the chain is on the extracellular side. N-linked (GlcNAc...) asparagine glycosylation occurs at Asn-41. 2 disulfide bridges follow: Cys-88/Cys-97 and Cys-122/Cys-130. Asn-221 is a glycosylation site (N-linked (GlcNAc...) asparagine). Intrachain disulfides connect Cys-257/Cys-360, Cys-273/Cys-305, and Cys-323/Cys-347. The disordered stretch occupies residues 353–372 (DSPESYPCGDEHTPSPIAGR). 2 N-linked (GlcNAc...) asparagine glycosylation sites follow: Asn-416 and Asn-469. Residues 463–515 (ACPQFPNCTTCLQARDPLCGWCILQGRCTRRGECGRAAQPNHWLWSYEDNHCP) enclose the PSI 1 domain. Cystine bridges form between Cys-464/Cys-481, Cys-470/Cys-514, Cys-473/Cys-490, Cys-484/Cys-496, and Cys-551/Cys-569. PSI domains follow at residues 609–671 (DCSA…EACP) and 776–822 (DCAM…QLCP). N-linked (GlcNAc...) asparagine glycosylation is found at Asn-791, Asn-889, Asn-910, Asn-946, Asn-1090, and Asn-1207. IPT/TIG domains are found at residues 823 to 914 (IPSI…FTYQ), 915 to 1001 (DPVL…FRYT), 1003 to 1134 (NPQL…FLYQ), and 1154 to 1221 (KPGH…QMGN). Residues 1246 to 1266 (LGLGMGAAVLIAAVLLLTLMY) form a helical membrane-spanning segment. Residues 1267-1902 (RHKSKKALRD…ALVEYKVTDL (636 aa)) lie on the Cytoplasmic side of the membrane.

This sequence belongs to the plexin family. As to quaternary structure, binds MET and MST1R. Interacts with RIT2/RIN. May form homodimers (via Sema domain). Interacts (via cytoplasmic domain) with FSCN1, ARHGDIA and RAC1. In terms of tissue distribution, expressed in brain (at protein level). In cerebellum, strongest expression detected in Purkinje and granular cells. Detected at very low levels in several fetal tissues, including dorsal root ganglia (DRG), heart, lung, optic bulb, brain and liver.

The protein localises to the cell membrane. Functionally, receptor for SEMA5A that plays a role in axon guidance, invasive growth and cell migration. Stimulates neurite outgrowth and mediates Ca(2+)/Mg(2+)-dependent cell aggregation. In glioma cells, SEMA5A stimulation of PLXNB3 results in the disassembly of F-actin stress fibers, disruption of focal adhesions and cellular collapse as well as inhibition of cell migration and invasion through ARHGDIA-mediated inactivation of RAC1. Seem to be non-essential for normal development and function of the central nervous system. The protein is Plexin-B3 (Plxnb3) of Mus musculus (Mouse).